We begin with the raw amino-acid sequence, 331 residues long: Heme A synthase (331 aa).

8 consecutive transmembrane segments (helical) span residues 6–26, 87–107, 124–144, 154–174, 193–213, 251–271, 279–299, and 301–321; these read VAIWLFLCSLMVICMVGIGGF, YVHRLIARLTGLVFILPFIYF, ALLFGILQAFAGWYMVKSGLV, LALHLLLALVIFALLSYQFFD, IWIILILVTVQIIFGAFVAGL, VQFIHRALALLILVLTAILTI, LYVMLFSVIIQVILGIVTLLL, and IPMAIAIAHQMFSFILFGSGL. Residue His-255 participates in heme binding. His-309 provides a ligand contact to heme.

Belongs to the COX15/CtaA family. Type 2 subfamily. Interacts with CtaB. The cofactor is heme b.

It is found in the cell membrane. The enzyme catalyses Fe(II)-heme o + 2 A + H2O = Fe(II)-heme a + 2 AH2. It functions in the pathway porphyrin-containing compound metabolism; heme A biosynthesis; heme A from heme O: step 1/1. Catalyzes the conversion of heme O to heme A by two successive hydroxylations of the methyl group at C8. The first hydroxylation forms heme I, the second hydroxylation results in an unstable dihydroxymethyl group, which spontaneously dehydrates, resulting in the formyl group of heme A. This chain is Heme A synthase, found in Wolbachia pipientis subsp. Culex pipiens (strain wPip).